Here is a 468-residue protein sequence, read N- to C-terminus: MTKTLPKDFIFGGATAAYQAEGATHTDGKGPVAWDKYLEDNYWYTAEPASDFYNRYPVDLKLSEEFGVNGIRISIAWSRIFPTGKGDVNPKGVEYYHNLFAECHKRHVEPFVTLHHFDTPEALHSDGDFLNRENIEHFVNYAEFCFKEFSEVNYWTTFNEIGPIGDGQYLVGKFPPGIQYDLAKVFQSHHNMMVSHARAVKLFKDGGYSGEIGVVHALPTKYPFDANNPDDVRAAELEDIIHNKFILDATYLGKYSDKTMEGVNHILEVNGGELDLREEDFVALDAAKDLNDFLGINYYMSDWMQAFDGETEIIHNGKGEKGSSKYQIKGVGRRKAPVDVPKTDWDWIIFPQGLYDQIMRVKADYPNYKKIYITENGLGYKDEFVDNTVYDDGRIDYVKKHLEVISDAISDGANVKGYFMWSLMDVFSWSNGYEKLYGLFYVDFETQERYPKKSAYWYKKVAETQVIE.

5 residues coordinate D-galactose 6-phosphate: glutamine 19, histidine 116, asparagine 159, glutamate 160, and asparagine 297. Glutamate 160 functions as the Proton donor in the catalytic mechanism. Glutamate 375 acts as the Nucleophile in catalysis. D-galactose 6-phosphate is bound by residues serine 428, tryptophan 429, lysine 435, and tyrosine 437.

The protein belongs to the glycosyl hydrolase 1 family.

The enzyme catalyses a 6-phospho-beta-D-galactoside + H2O = D-galactose 6-phosphate + an alcohol. It functions in the pathway carbohydrate metabolism; lactose degradation; D-galactose 6-phosphate and beta-D-glucose from lactose 6-phosphate: step 1/1. The protein is 6-phospho-beta-galactosidase of Streptococcus pyogenes serotype M4 (strain MGAS10750).